A 122-amino-acid chain; its full sequence is Putative protein adenylyltransferase MJ1547 (122 aa).

Positions 11–25 (GSYAKNEYTKRSDID) match the GSX(10)DXD motif motif. Positions 23, 25, and 48 each coordinate Mg(2+).

This sequence belongs to the MntA antitoxin family. As to quaternary structure, probably forms a complex with cognate toxin MJ1548. It depends on Mg(2+) as a cofactor.

It carries out the reaction L-tyrosyl-[protein] + ATP = O-(5'-adenylyl)-L-tyrosyl-[protein] + diphosphate. It catalyses the reaction O-(5'-adenylyl)-L-tyrosyl-[protein] + ATP = O-[5'-(adenylyl-(5'-&gt;3')-adenylyl)]-L-tyrosyl-[protein] + diphosphate. In terms of biological role, probable antitoxin component of a putative type VII toxin-antitoxin (TA) system. Neutralizes cognate toxic MJ1548 by di-AMPylation. The chain is Putative protein adenylyltransferase MJ1547 from Methanocaldococcus jannaschii (strain ATCC 43067 / DSM 2661 / JAL-1 / JCM 10045 / NBRC 100440) (Methanococcus jannaschii).